The sequence spans 132 residues: MVMTDPIADFLTRIRNANQVKHEVLEVPASNIKKGIAEILKREGFVKNVEVIEDDKQGIIRVFLKYGKNGERVITNLKRISKPGLRVYAKRDDMPKVLNGLGIAIISTSEGLLTDKEARQKNVGGEVVAYVW.

The protein belongs to the universal ribosomal protein uS8 family. In terms of assembly, part of the 30S ribosomal subunit. Contacts proteins S5 and S12.

In terms of biological role, one of the primary rRNA binding proteins, it binds directly to 16S rRNA central domain where it helps coordinate assembly of the platform of the 30S subunit. The polypeptide is Small ribosomal subunit protein uS8 (Streptococcus pyogenes serotype M49 (strain NZ131)).